Reading from the N-terminus, the 112-residue chain is Large ribosomal subunit protein P1 (112 aa).

Residues 80–112 (AAAAPAAESKKEEKKKEEESDQSDDDMGFGLFD) are disordered. The span at 87–97 (ESKKEEKKKEE) shows a compositional bias: basic and acidic residues. Residues Ser99 and Ser102 each carry the phosphoserine modification.

The protein belongs to the eukaryotic ribosomal protein P1/P2 family. In terms of assembly, P1 and P2 exist as dimers at the large ribosomal subunit.

Functionally, plays an important role in the elongation step of protein synthesis. This is Large ribosomal subunit protein P1 (RpLP1) from Drosophila melanogaster (Fruit fly).